The chain runs to 228 residues: 2-C-methyl-D-erythritol 4-phosphate cytidylyltransferase (228 aa).

It belongs to the IspD/TarI cytidylyltransferase family. IspD subfamily.

The enzyme catalyses 2-C-methyl-D-erythritol 4-phosphate + CTP + H(+) = 4-CDP-2-C-methyl-D-erythritol + diphosphate. It participates in isoprenoid biosynthesis; isopentenyl diphosphate biosynthesis via DXP pathway; isopentenyl diphosphate from 1-deoxy-D-xylulose 5-phosphate: step 2/6. Functionally, catalyzes the formation of 4-diphosphocytidyl-2-C-methyl-D-erythritol from CTP and 2-C-methyl-D-erythritol 4-phosphate (MEP). The chain is 2-C-methyl-D-erythritol 4-phosphate cytidylyltransferase from Actinobacillus pleuropneumoniae serotype 3 (strain JL03).